Reading from the N-terminus, the 510-residue chain is GPI mannosyltransferase 4 (510 aa).

A run of 3 helical transmembrane segments spans residues leucine 7–histidine 27, phenylalanine 62–glycine 82, and alanine 89–leucine 109. N-linked (GlcNAc...) asparagine glycosylation occurs at asparagine 142. The helical transmembrane segment at leucine 179–valine 199 threads the bilayer. N-linked (GlcNAc...) asparagine glycosylation occurs at asparagine 212. 3 helical membrane passes run isoleucine 213–valine 233, leucine 268–threonine 288, and phenylalanine 339–glycine 359.

Belongs to the glycosyltransferase 22 family. PIGZ subfamily.

It is found in the endoplasmic reticulum membrane. The protein operates within glycolipid biosynthesis; glycosylphosphatidylinositol-anchor biosynthesis. In terms of biological role, alpha-1,2-mannosyltransferase involved in glycosylphosphatidylinositol-anchor biosynthesis. Transfers a fourth mannose to trimannosyl-GPIs during GPI precursor assembly. The presence of a fourth mannose in GPI is essential in fungi. This Yarrowia lipolytica (strain CLIB 122 / E 150) (Yeast) protein is GPI mannosyltransferase 4 (SMP3).